The sequence spans 429 residues: Phosphomethylpyrimidine synthase (429 aa).

Substrate-binding positions include N66, M95, Y124, H163, 185–187 (SRG), 226–229 (DGLR), and E265. Residue H269 coordinates Zn(2+). Y292 is a binding site for substrate. A Zn(2+)-binding site is contributed by H333. C407, C410, and C414 together coordinate [4Fe-4S] cluster.

Belongs to the ThiC family. It depends on [4Fe-4S] cluster as a cofactor.

The enzyme catalyses 5-amino-1-(5-phospho-beta-D-ribosyl)imidazole + S-adenosyl-L-methionine = 4-amino-2-methyl-5-(phosphooxymethyl)pyrimidine + CO + 5'-deoxyadenosine + formate + L-methionine + 3 H(+). The protein operates within cofactor biosynthesis; thiamine diphosphate biosynthesis. Catalyzes the synthesis of the hydroxymethylpyrimidine phosphate (HMP-P) moiety of thiamine from aminoimidazole ribotide (AIR) in a radical S-adenosyl-L-methionine (SAM)-dependent reaction. This Pyrococcus furiosus (strain ATCC 43587 / DSM 3638 / JCM 8422 / Vc1) protein is Phosphomethylpyrimidine synthase.